We begin with the raw amino-acid sequence, 637 residues long: MSDGNDFAELLWENGQAVVHGRKKHPQPAFPPFGFFGGTGGGGGGSSSRAQERQPGGIDAFAKVGGGFGALGMAPAVHDFASGFGATTQDNGDDDTVPWIHYPIIDDEDAAAPAALAAADYGSDFFSELQAAAAAAAAAAPPTDLASLPASNHNGATNNRNAPVATTTTREPSKESHGGLSVPTTRAEPQPQPQLAAAKLPRSSGSGGGEGVMNFSLFSRPAVLARATLESAQRTQGTDNKASNVTASNRVESTVVQTASGPRSAPAFADQRAAAWPPQPKEMPFASTAAAPMAPAVNLHHEMGRDRAGRTMPVHKTEARKAPEATVATSSVCSGNGAGSDELWRQQKRKCQAQAECSASQDDDLDDEPGVLRKSGTRSTKRSRTAEVHNLSERRRRDRINEKMRALQELIPNCNKIDKASMLDEAIEYLKTLQLQVQMMSMGTGLCIPPMLLPTAMQHLQIPPMAHFPHLGMGLGYGMGVFDMSNTGALQMPPMPGAHFPCPMIPGASPQGLGIPGTSTMPMFGVPGQTIPSSASSVPPFASLAGLPVRPSGVPQVSGAMANMVQDQQQGIANQQQQCLNKEAIQGANPGDSQMQIIMQGDNENFRIPSSAQTKSSQFSDGTGKGTNARERDGAET.

Residues 35–46 (FFGGTGGGGGGS) are compositionally biased toward gly residues. Disordered stretches follow at residues 35-54 (FFGG…QERQ), 146-213 (ASLP…EGVM), and 356-397 (ECSA…RRRR). The span at 149 to 170 (PASNHNGATNNRNAPVATTTTR) shows a compositional bias: polar residues. The basic motif stretch occupies residues 384–397 (RTAEVHNLSERRRR). Positions 384-397 (RTAEVHNLSERRRR) are enriched in basic and acidic residues. Residues 384-433 (RTAEVHNLSERRRRDRINEKMRALQELIPNCNKIDKASMLDEAIEYLKTL) form the bHLH domain. Residues 398-433 (DRINEKMRALQELIPNCNKIDKASMLDEAIEYLKTL) are helix-loop-helix motif. The interval 601–637 (GDNENFRIPSSAQTKSSQFSDGTGKGTNARERDGAET) is disordered. Over residues 608 to 621 (IPSSAQTKSSQFSD) the composition is skewed to polar residues. Over residues 628-637 (NARERDGAET) the composition is skewed to basic and acidic residues.

The protein belongs to the bHLH protein family. In terms of assembly, interacts with LF and PRR1.

Its subcellular location is the nucleus. Transcription factor that may act as negative regulator of phyB-dependent light signal transduction. The chain is Transcription factor PHYTOCHROME INTERACTING FACTOR-LIKE 15 from Oryza sativa subsp. japonica (Rice).